A 489-amino-acid polypeptide reads, in one-letter code: uncharacterized protein (489 aa).

12 consecutive transmembrane segments (helical) span residues Leu14–Phe34, Leu36–Leu56, Ile100–Ile120, Leu127–Ile147, Leu158–Ile178, Glu203–Val223, Ile241–Asn261, Ala286–Thr306, Ile344–Val364, Val380–Ile400, Leu419–Ile439, and His449–Leu469.

To M.genitalium MG226.

It is found in the cell membrane. This is an uncharacterized protein from Mycoplasma genitalium (strain ATCC 33530 / DSM 19775 / NCTC 10195 / G37) (Mycoplasmoides genitalium).